Reading from the N-terminus, the 349-residue chain is Isopentenyl-diphosphate delta-isomerase (349 aa).

Position 6 to 7 (6 to 7 (RK)) interacts with substrate. FMN-binding positions include 62–64 (AMT), S93, and N122. Q152 is a binding site for substrate. E153 serves as a coordination point for Mg(2+). FMN is bound by residues K184, T214, 258 to 259 (GG), and 280 to 281 (AG).

The protein belongs to the IPP isomerase type 2 family. Homooctamer. Dimer of tetramers. Requires FMN as cofactor. The cofactor is NADPH. Mg(2+) is required as a cofactor.

Its subcellular location is the cytoplasm. It carries out the reaction isopentenyl diphosphate = dimethylallyl diphosphate. Functionally, involved in the biosynthesis of isoprenoids. Catalyzes the 1,3-allylic rearrangement of the homoallylic substrate isopentenyl (IPP) to its allylic isomer, dimethylallyl diphosphate (DMAPP). The protein is Isopentenyl-diphosphate delta-isomerase of Bacillus anthracis (strain A0248).